The sequence spans 1481 residues: Cystic fibrosis transmembrane conductance regulator (1481 aa).

Residues 1-77 (MQRSPLEKAS…KLINALRRCF (77 aa)) are Cytoplasmic-facing. A helical transmembrane segment spans residues 78-98 (FWRFMFYGILLYLGEVTKAVQ). Residues 81 to 365 (FMFYGILLYL…WAVQTWYDSL (285 aa)) enclose the ABC transmembrane type-1 1 domain. The Extracellular segment spans residues 99 to 122 (PLLLGRIIASYDPDNKVERSIAIY). Residues 123 to 146 (LGIGLCLLFIVRMLLLHPAIFGLH) traverse the membrane as a helical segment. Topologically, residues 147–195 (HIGMQMRIAMFSLIYKKILKLSSRVLDKISIGQLVSLLSNNLNKFDEGL) are cytoplasmic. Residues 196 to 216 (ALAHFVWIAPLQVMLLMGLLW) traverse the membrane as a helical segment. The Extracellular portion of the chain corresponds to 217–222 (ELLQAS). Residues 223-243 (AFCGLGFLIVLALFQSGLGRM) form a helical membrane-spanning segment. Over 244–298 (MMKYRDQRAGKINERLVITSEMIENIQSVKAYCWEEAMEKMIENLRQTELKLTRK) the chain is Cytoplasmic. The chain crosses the membrane as a helical span at residues 299–319 (AAYVRYFNSSAFFFSGFFVVF). Residues 320–339 (LSVLPYALIKGIILRKIFTT) are Extracellular-facing. Residues 340–358 (ISFCIVLRMAVTRQFPWAV) form a helical membrane-spanning segment. Topologically, residues 359-858 (QTWYDSLGAI…YLRYITVHKS (500 aa)) are cytoplasmic. Residues tryptophan 401, 458-465 (GSTGAGKT), and glutamine 493 each bind ATP. The ABC transporter 1 domain occupies 423–646 (NGDNSLFFSN…RPDFSSKLMG (224 aa)). Cysteine 524 carries S-palmitoyl cysteine lipidation. Residues serine 549 and serine 660 each carry the phosphoserine modification. A disordered R region region spans residues 654-831 (SAERRNSILT…EEINEEDLKE (178 aa)). At serine 670 the chain carries Phosphoserine; by PKA. Position 686 is a phosphoserine (serine 686). A Glycyl lysine isopeptide (Lys-Gly) (interchain with G-Cter in ubiquitin) cross-link involves residue lysine 688. A phosphoserine mark is found at serine 700 and serine 712. At threonine 717 the chain carries Phosphothreonine. Residues serine 737, serine 768, serine 790, serine 795, and serine 813 each carry the phosphoserine modification. Residues 859–879 (LIFVLIWCLVIFLAEVAVSLV) traverse the membrane as a helical segment. The region spanning 859 to 1155 (LIFVLIWCLV…AVNSSIDVDS (297 aa)) is the ABC transmembrane type-1 2 domain. Residues 880-918 (LLWLLGNAPAYNKGNSTISANSSYAVIITSTSAYYVFYI) lie on the Extracellular side of the membrane. Residues asparagine 894 and asparagine 900 are each glycosylated (N-linked (GlcNAc...) asparagine). A discontinuously helical membrane pass occupies residues 919 to 939 (YVGVADTLLALGFFRGLPLVH). Residues 940–990 (TLITVSKILHHKMLHSVLQAPMSTLNALKAGGILNRFSKDIAILDDLLPLT) are Cytoplasmic-facing. The chain crosses the membrane as a helical span at residues 991–1011 (IFDFIQLLLIVIGAVAVVSVL). Residues 1012-1013 (QP) are Extracellular-facing. Residues 1014–1034 (YIFLATVPVIVTFIILRAYFL) traverse the membrane as a helical segment. Over 1035-1095 (HTSQQLKQLE…TANWFLYLST (61 aa)) the chain is Cytoplasmic. Residues 1096-1116 (LRWFQMRIEMVFVIFFIVVTF) traverse the membrane as a helical segment. Topologically, residues 1117-1130 (ISILTTGEGEGQVG) are extracellular. Residues 1131–1151 (IILTLAMNIMGTLQWAVNSSI) form a helical membrane-spanning segment. Residues 1152–1481 (DVDSLMRSVS…TEEEVQDTRL (330 aa)) are Cytoplasmic-facing. The ABC transporter 2 domain maps to 1211–1444 (MTVKDLTARY…KSLFRQAISP (234 aa)). ATP contacts are provided by residues tyrosine 1220 and 1245-1252 (GRTGSGKS). Residues 1387–1481 (RTLKQAFADC…TEEEVQDTRL (95 aa)) form an interaction with GORASP2 region. Cysteine 1396 is lipidated: S-palmitoyl cysteine. Residues serine 1445 and serine 1457 each carry the phosphoserine modification. Positions 1449–1481 (KLFPRRNSSKHKSRPPITALKEETEEEVQDTRL) are disordered. Residues 1450-1462 (LFPRRNSSKHKSR) are compositionally biased toward basic residues. Over residues 1471–1481 (ETEEEVQDTRL) the composition is skewed to acidic residues. Positions 1479–1481 (TRL) match the PDZ-binding motif.

Belongs to the ABC transporter superfamily. ABCC family. CFTR transporter (TC 3.A.1.202) subfamily. As to quaternary structure, monomer; does not require oligomerization for channel activity. May form oligomers in the membrane. Interacts with SLC26A3, SLC26A6 and NHERF1. Interacts with SHANK2. Interacts with MYO6. Interacts (via C-terminus) with GOPC (via PDZ domain); this promotes CFTR internalization and thereby decreases channel activity. Interacts with SLC4A7 through NHERF1. Found in a complex with MYO5B and RAB11A. Interacts with ANO1. Interacts with SLC26A8. Interacts with AHCYL1; the interaction increases CFTR activity. Interacts with CSE1L. The core-glycosylated form interacts with GORASP2 (via PDZ GRASP-type 1 domain) in respone to ER stress. Interacts with MARCHF2; the interaction leads to CFTR ubiqtuitination and degradation. Interacts with ADGRG2. Post-translationally, N-glycosylated. Phosphorylated; cAMP treatment promotes phosphorylation and activates the channel. Dephosphorylation decreases the ATPase activity (in vitro). Phosphorylation at PKA sites activates the channel. Phosphorylation at PKC sites enhances the response to phosphorylation by PKA. Phosphorylated by AMPK; this inhibits channel activity. In terms of processing, ubiquitinated, leading to its degradation in the lysosome. Deubiquitination by USP10 in early endosomes enhances its endocytic recycling to the cell membrane. Ubiquitinated by RNF185 during ER stress. Ubiquitinated by MARCHF2.

Its subcellular location is the apical cell membrane. It is found in the early endosome membrane. The protein resides in the cell membrane. It localises to the recycling endosome membrane. The protein localises to the endoplasmic reticulum membrane. Its subcellular location is the nucleus. It carries out the reaction ATP + H2O + closed Cl(-) channel = ADP + phosphate + open Cl(-) channel.. It catalyses the reaction chloride(in) = chloride(out). The catalysed reaction is hydrogencarbonate(in) = hydrogencarbonate(out). The enzyme catalyses ATP + H2O = ADP + phosphate + H(+). Functionally, epithelial ion channel that plays an important role in the regulation of epithelial ion and water transport and fluid homeostasis. Mediates the transport of chloride ions across the cell membrane. Possesses an intrinsic ATPase activity and utilizes ATP to gate its channel; the passive flow of anions through the channel is gated by cycles of ATP binding and hydrolysis by the ATP-binding domains. The ion channel is also permeable to HCO(3)(-); selectivity depends on the extracellular chloride concentration. Exerts its function also by modulating the activity of other ion channels and transporters. Contributes to the regulation of the pH and the ion content of the epithelial fluid layer. Modulates the activity of the epithelial sodium channel (ENaC) complex, in part by regulating the cell surface expression of the ENaC complex. May regulate bicarbonate secretion and salvage in epithelial cells by regulating the transporter SLC4A7. Can inhibit the chloride channel activity of ANO1. Plays a role in the chloride and bicarbonate homeostasis during sperm epididymal maturation and capacitation. The sequence is that of Cystic fibrosis transmembrane conductance regulator from Microcebus murinus (Gray mouse lemur).